The following is a 648-amino-acid chain: Probable potassium transport system protein Kup 1 (648 aa).

Transmembrane regions (helical) follow at residues 25 to 45, 57 to 77, 113 to 133, 153 to 173, 184 to 204, 219 to 239, 263 to 283, 312 to 332, 362 to 382, 391 to 411, 417 to 437, and 446 to 466; these read LTLG…IYAF, IVAG…ILVV, LVMA…VITP, SVSR…LFLM, LFGP…LIHI, GVLF…AVFL, WLAI…AFAL, IPLV…VITG, IYLP…VLGF, AYGV…FLVV, WGWP…LFFF, and EGGW…VTWV.

The protein belongs to the HAK/KUP transporter (TC 2.A.72) family.

Its subcellular location is the cell inner membrane. The enzyme catalyses K(+)(in) + H(+)(in) = K(+)(out) + H(+)(out). Transport of potassium into the cell. Likely operates as a K(+):H(+) symporter. The polypeptide is Probable potassium transport system protein Kup 1 (Rhizorhabdus wittichii (strain DSM 6014 / CCUG 31198 / JCM 15750 / NBRC 105917 / EY 4224 / RW1) (Sphingomonas wittichii)).